A 251-amino-acid polypeptide reads, in one-letter code: uncharacterized protein (251 aa).

An NADP(+)-binding site is contributed by 14-37 (VLGGTSAIGLATARRLIARGARLV). Ser145 contributes to the substrate binding site. The active-site Proton acceptor is Tyr158.

Belongs to the short-chain dehydrogenases/reductases (SDR) family.

Functionally, may be involved in the biosynthesis of a heptaene-type antibiotic. This is an uncharacterized protein from Streptomyces coelicolor.